Here is a 438-residue protein sequence, read N- to C-terminus: Trigger factor (438 aa).

The PPIase FKBP-type domain maps to 163–249; sequence EDFVLIDYEG…LKEIRKQILP (87 aa).

This sequence belongs to the FKBP-type PPIase family. Tig subfamily.

The protein resides in the cytoplasm. The enzyme catalyses [protein]-peptidylproline (omega=180) = [protein]-peptidylproline (omega=0). Its function is as follows. Involved in protein export. Acts as a chaperone by maintaining the newly synthesized protein in an open conformation. Functions as a peptidyl-prolyl cis-trans isomerase. In Desulfatibacillum aliphaticivorans, this protein is Trigger factor.